We begin with the raw amino-acid sequence, 141 residues long: Hemoglobin subunit alpha-A (141 aa).

Residues 1-141 enclose the Globin domain; sequence VLSGSDKTNV…VGNVLTAKYR (141 aa). Histidine 58 serves as a coordination point for O2. Histidine 87 serves as a coordination point for heme b.

The protein belongs to the globin family. As to quaternary structure, heterotetramer of two alpha chains and two beta chains. As to expression, red blood cells.

Functionally, involved in oxygen transport from the lung to the various peripheral tissues. This is Hemoglobin subunit alpha-A (HBAA) from Vultur gryphus (Andean condor).